The following is a 139-amino-acid chain: ATP synthase epsilon chain (139 aa).

Belongs to the ATPase epsilon chain family. As to quaternary structure, F-type ATPases have 2 components, CF(1) - the catalytic core - and CF(0) - the membrane proton channel. CF(1) has five subunits: alpha(3), beta(3), gamma(1), delta(1), epsilon(1). CF(0) has three main subunits: a, b and c.

The protein resides in the cell inner membrane. Produces ATP from ADP in the presence of a proton gradient across the membrane. This Erwinia tasmaniensis (strain DSM 17950 / CFBP 7177 / CIP 109463 / NCPPB 4357 / Et1/99) protein is ATP synthase epsilon chain.